A 73-amino-acid polypeptide reads, in one-letter code: Toxin Td10 (73 aa).

The signal sequence occupies residues 1 to 7 (IGMVVEC). An LCN-type CS-alpha/beta domain is found at 8–70 (KDGYLMGPDG…VWERATNRCG (63 aa)). Disulfide bonds link C18–C69, C22–C44, C30–C50, and C34–C52. K71 is subject to Lysine amide.

Belongs to the long (4 C-C) scorpion toxin superfamily. Sodium channel inhibitor family. Beta subfamily. In terms of tissue distribution, expressed by the venom gland.

It is found in the secreted. Beta toxins bind voltage-independently at site-4 of sodium channels (Nav) and shift the voltage of activation toward more negative potentials thereby affecting sodium channel activation and promoting spontaneous and repetitive firing. This chain is Toxin Td10, found in Tityus discrepans (Venezuelan scorpion).